A 131-amino-acid chain; its full sequence is Maturin (131 aa).

Position 34 is a phosphotyrosine (Tyr-34). Positions 107-120 are enriched in acidic residues; that stretch reads FEEYSADVEEEEPE. The disordered stretch occupies residues 107 to 131; it reads FEEYSADVEEEEPEADHPQMGVSQQ.

This sequence belongs to the MTURN family. In terms of processing, phosphorylation at Tyr-34 is essential for its ability to promote megakaryocyte differentiation.

The protein localises to the cytoplasm. Promotes megakaryocyte differentiation by enhancing ERK and JNK signaling as well as up-regulating RUNX1 and FLI1 expression. Represses NF-kappa-B transcriptional activity by inhibiting phosphorylation of RELA at 'Ser- 536'. May be involved in early neuronal development. The chain is Maturin (Mturn) from Rattus norvegicus (Rat).